The primary structure comprises 206 residues: Histidine biosynthesis bifunctional protein HisIE (206 aa).

The interval 1-117 (MGSNEVATGD…SCFPSAPGQF (117 aa)) is phosphoribosyl-AMP cyclohydrolase. Positions 118–206 (LGSLDALVAE…AAALLESRHQ (89 aa)) are phosphoribosyl-ATP pyrophosphohydrolase.

The protein in the N-terminal section; belongs to the PRA-CH family. In the C-terminal section; belongs to the PRA-PH family.

The protein localises to the cytoplasm. The catalysed reaction is 1-(5-phospho-beta-D-ribosyl)-ATP + H2O = 1-(5-phospho-beta-D-ribosyl)-5'-AMP + diphosphate + H(+). It carries out the reaction 1-(5-phospho-beta-D-ribosyl)-5'-AMP + H2O = 1-(5-phospho-beta-D-ribosyl)-5-[(5-phospho-beta-D-ribosylamino)methylideneamino]imidazole-4-carboxamide. It functions in the pathway amino-acid biosynthesis; L-histidine biosynthesis; L-histidine from 5-phospho-alpha-D-ribose 1-diphosphate: step 2/9. Its pathway is amino-acid biosynthesis; L-histidine biosynthesis; L-histidine from 5-phospho-alpha-D-ribose 1-diphosphate: step 3/9. The chain is Histidine biosynthesis bifunctional protein HisIE from Xanthomonas axonopodis pv. citri (strain 306).